Here is a 296-residue protein sequence, read N- to C-terminus: 4-hydroxybenzoate octaprenyltransferase (296 aa).

Transmembrane regions (helical) follow at residues 28-48 (IGTL…SDGI), 51-71 (LAVL…GCVI), 102-122 (LLLT…LNHL), 143-163 (FFPI…PMAF), 174-194 (AWIL…VYAM), 212-232 (FGRY…LLMA), 233-253 (VLGA…IVLL), and 274-294 (FLAN…HTFF).

Belongs to the UbiA prenyltransferase family. Mg(2+) is required as a cofactor.

The protein resides in the cell inner membrane. It carries out the reaction all-trans-octaprenyl diphosphate + 4-hydroxybenzoate = 4-hydroxy-3-(all-trans-octaprenyl)benzoate + diphosphate. It functions in the pathway cofactor biosynthesis; ubiquinone biosynthesis. Catalyzes the prenylation of para-hydroxybenzoate (PHB) with an all-trans polyprenyl group. Mediates the second step in the final reaction sequence of ubiquinone-8 (UQ-8) biosynthesis, which is the condensation of the polyisoprenoid side chain with PHB, generating the first membrane-bound Q intermediate 3-octaprenyl-4-hydroxybenzoate. The protein is 4-hydroxybenzoate octaprenyltransferase of Neisseria gonorrhoeae (strain ATCC 700825 / FA 1090).